The sequence spans 300 residues: Ribosomal RNA small subunit methyltransferase H (300 aa).

S-adenosyl-L-methionine-binding positions include 33 to 35, Asp53, Phe78, Asp97, and Gln104; that span reads GGH.

It belongs to the methyltransferase superfamily. RsmH family.

The protein resides in the cytoplasm. The catalysed reaction is cytidine(1402) in 16S rRNA + S-adenosyl-L-methionine = N(4)-methylcytidine(1402) in 16S rRNA + S-adenosyl-L-homocysteine + H(+). Its function is as follows. Specifically methylates the N4 position of cytidine in position 1402 (C1402) of 16S rRNA. This Karelsulcia muelleri (strain GWSS) (Sulcia muelleri) protein is Ribosomal RNA small subunit methyltransferase H.